The sequence spans 188 residues: Tuftelin (188 aa).

The stretch at 1–181 (SLRKTVQDLL…DRMEHLIEKQ (181 aa)) forms a coiled coil.

This sequence belongs to the tuftelin family. As to quaternary structure, interacts with TFIP11.

It is found in the secreted. Involved in the structural organization of the epidermis. Involved in the mineralization and structural organization of enamel. The sequence is that of Tuftelin (TUFT1) from Sus scrofa (Pig).